The following is a 313-amino-acid chain: Protein FixB (313 aa).

Residue 255–283 (LYLAVGISGQIQHMVGANASQTIFAINKD) participates in FAD binding.

It belongs to the ETF alpha-subunit/FixB family. As to quaternary structure, heterodimer of FixA and FixB.

It functions in the pathway amine and polyamine metabolism; carnitine metabolism. In terms of biological role, required for anaerobic carnitine reduction. May bring reductant to CaiA. The sequence is that of Protein FixB from Escherichia coli (strain K12 / MC4100 / BW2952).